The primary structure comprises 171 residues: Photosystem I assembly protein Ycf3 (171 aa).

TPR repeat units follow at residues 33–66 (AFSYYRYGMSAQSSGDYAEALENYYEALKLEEDP), 70–103 (SYILYNIGLIYGNNGDYSKSLDYYHQALDLNSRL), and 118–151 (GTKSSEKKEFEVAQNNFDKAASYWKKAIRLAPNN).

Belongs to the Ycf3 family.

It is found in the plastid. It localises to the chloroplast thylakoid membrane. Its function is as follows. Essential for the assembly of the photosystem I (PSI) complex. May act as a chaperone-like factor to guide the assembly of the PSI subunits. The sequence is that of Photosystem I assembly protein Ycf3 from Emiliania huxleyi (Coccolithophore).